A 312-amino-acid polypeptide reads, in one-letter code: Taste receptor type 2 member 7 (312 aa).

The Extracellular portion of the chain corresponds to 1–9 (MTYETDTTL). Residues 10–30 (MFVAVCEALVGILGNAFIALV) traverse the membrane as a helical segment. The Cytoplasmic portion of the chain corresponds to 31–49 (NFMGWMKNRKITAIDLILS). Residues 50 to 70 (SLAMSRICLQCIILLDCIILV) form a helical membrane-spanning segment. Over 71–101 (QYPDTYNRGKEMRIIDFFWTLTNHLSVWFAT) the chain is Extracellular. A helical transmembrane segment spans residues 102 to 122 (CLSIFYFFKIANFFHPLFLWI). Topologically, residues 123–128 (KWRIDK) are cytoplasmic. A helical membrane pass occupies residues 129 to 149 (LILRTLLACLILSLCFSLPVT). At 150-187 (ENLTDDFRRCVKTKERINSTLRCKLNKAGYASVKVNLN) the chain is on the extracellular side. 2 N-linked (GlcNAc...) asparagine glycosylation sites follow: asparagine 151 and asparagine 167. A helical membrane pass occupies residues 188–208 (LVMLFPFSVSLVSFLLLILSL). Topologically, residues 209-235 (WRHTRQMQLNVTGYNDPSTTAHVKATK) are cytoplasmic. A helical transmembrane segment spans residues 236 to 256 (AVISFLVLFIVYCLAFLIATS). The Extracellular segment spans residues 257 to 266 (SYFMPESELA). The helical transmembrane segment at 267–287 (VIWGELIALIYPSSHSFILIL) threads the bilayer. Over 288-312 (GNSKLKQASVRVLCRVKTMLKGRKY) the chain is Cytoplasmic.

This sequence belongs to the G-protein coupled receptor T2R family. Expressed in subsets of taste receptor cells of the tongue and palate epithelium and exclusively in gustducin-positive cells. Expressed in 15% taste bud cells in circumvallate and foliate papillae but only in 2% in fungiform papillae. Expressed in the duodenum, antrum and fundus (part of the stomach) and in gastric endocrine cells.

Its subcellular location is the membrane. Its function is as follows. Gustducin-coupled receptor implicated in the perception of bitter compounds in the oral cavity and the gastrointestinal tract. Signals through PLCB2 and the calcium-regulated cation channel TRPM5. This is Taste receptor type 2 member 7 (Tas2r7) from Rattus norvegicus (Rat).